A 233-amino-acid polypeptide reads, in one-letter code: Probable septum site-determining protein MinC (233 aa).

Residues 104-124 (QKMATPEPAPAPAPVVDPNAP) form a disordered region.

It belongs to the MinC family. As to quaternary structure, interacts with MinD and FtsZ.

Its function is as follows. Cell division inhibitor that blocks the formation of polar Z ring septums. Rapidly oscillates between the poles of the cell to destabilize FtsZ filaments that have formed before they mature into polar Z rings. Prevents FtsZ polymerization. The protein is Probable septum site-determining protein MinC of Serratia proteamaculans (strain 568).